The chain runs to 365 residues: Phospho-N-acetylmuramoyl-pentapeptide-transferase (365 aa).

A run of 10 helical transmembrane segments spans residues 22-42 (YISVRIIMISITSLLITLALG), 74-94 (TMGGVLILSSVIISCLLWGDL), 95-115 (TSIYLWILILVVIFFGAIGFF), 133-153 (YKFALQSIFSIVLAIVLFYLL), 168-188 (SLYIPMGIVIFVVLAFFIING), 201-221 (GLAIVPVVLVAAGLGIYAYIE), 240-260 (LAEVAVFCAAVCGSGLAFLWF), 267-287 (VFMGDVGSLTLGAVLGVIAVM), 292-312 (LIFFIMGLLFVVEALSVMLQV), and 342-362 (KVVIRFWIISLILFLIGLAAI).

It belongs to the glycosyltransferase 4 family. MraY subfamily. The cofactor is Mg(2+).

It localises to the cell inner membrane. The catalysed reaction is UDP-N-acetyl-alpha-D-muramoyl-L-alanyl-gamma-D-glutamyl-meso-2,6-diaminopimeloyl-D-alanyl-D-alanine + di-trans,octa-cis-undecaprenyl phosphate = di-trans,octa-cis-undecaprenyl diphospho-N-acetyl-alpha-D-muramoyl-L-alanyl-D-glutamyl-meso-2,6-diaminopimeloyl-D-alanyl-D-alanine + UMP. The protein operates within cell wall biogenesis; peptidoglycan biosynthesis. Its function is as follows. Catalyzes the initial step of the lipid cycle reactions in the biosynthesis of the cell wall peptidoglycan: transfers peptidoglycan precursor phospho-MurNAc-pentapeptide from UDP-MurNAc-pentapeptide onto the lipid carrier undecaprenyl phosphate, yielding undecaprenyl-pyrophosphoryl-MurNAc-pentapeptide, known as lipid I. The polypeptide is Phospho-N-acetylmuramoyl-pentapeptide-transferase (Francisella tularensis subsp. tularensis (strain WY96-3418)).